The primary structure comprises 296 residues: NAD kinase (296 aa).

The active-site Proton acceptor is the aspartate 72. NAD(+) contacts are provided by residues 72–73, 146–147, arginine 157, lysine 174, aspartate 176, 187–192, and glutamine 247; these read DG, ND, and TAYALS.

The protein belongs to the NAD kinase family. A divalent metal cation serves as cofactor.

The protein localises to the cytoplasm. The enzyme catalyses NAD(+) + ATP = ADP + NADP(+) + H(+). Involved in the regulation of the intracellular balance of NAD and NADP, and is a key enzyme in the biosynthesis of NADP. Catalyzes specifically the phosphorylation on 2'-hydroxyl of the adenosine moiety of NAD to yield NADP. This Pseudomonas fluorescens (strain ATCC BAA-477 / NRRL B-23932 / Pf-5) protein is NAD kinase.